We begin with the raw amino-acid sequence, 572 residues long: Protein misato homolog 1 (572 aa).

This sequence belongs to the misato family.

Its subcellular location is the mitochondrion outer membrane. It localises to the cytoplasm. In terms of biological role, involved in the regulation of mitochondrial distribution and morphology. Required for mitochondrial fusion and mitochondrial network formation. The chain is Protein misato homolog 1 (MSTO1) from Bos taurus (Bovine).